The primary structure comprises 347 residues: Transcription factor EC (347 aa).

The tract at residues 1 to 119 is necessary for transcriptional transactivation; sequence MTLDHQIINP…GLTSASCPSS (119 aa). The 54-residue stretch at 139–192 folds into the bHLH domain; the sequence is QKKDNHNLIERRRRYNINYRIKELGTLIPKSNDPDMRWNKGTILKASVEYIKWL. The segment at 271 to 347 is necessary for transcriptional transactivation; the sequence is PSPELCDQAI…SFSSDDGDEL (77 aa). The segment at 319–347 is disordered; it reads DPLLSATSPAVSKESSRRSSFSSDDGDEL. Residues 326-341 show a composition bias toward low complexity; it reads SPAVSKESSRRSSFSS.

This sequence belongs to the MiT/TFE family. In terms of assembly, homodimer. Forms heterodimers with TFE3. Forms heterodimers with MITF. Interacts with MITF. In terms of tissue distribution, expressed moderately in spleen, kidney, bone marrow, small intestine and leukocytes. Expressed weakly in testis, trachea and colon.

Its subcellular location is the nucleus. Its function is as follows. Transcriptional regulator that acts as a repressor or an activator. Acts as a transcriptional repressor on minimal promoter containing element F (that includes an E-box sequence). Binds to element F in an E-box sequence-specific manner. Acts as a transcriptional transactivator on the proximal promoter region of the tartrate-resistant acid phosphatase (TRAP) E-box containing promoter. Collaborates with MITF in target gene activation. Acts as a transcriptional repressor on minimal promoter containing mu E3 enhancer sequence. Binds to mu E3 DNA sequence of the immunoglobulin heavy-chain gene enhancer. Binds DNA in a homo- or heterodimeric form. The polypeptide is Transcription factor EC (TFEC) (Homo sapiens (Human)).